The primary structure comprises 343 residues: N-acetyl-gamma-glutamyl-phosphate reductase (343 aa).

The active site involves Cys-146.

Belongs to the NAGSA dehydrogenase family. Type 1 subfamily.

The protein localises to the cytoplasm. It carries out the reaction N-acetyl-L-glutamate 5-semialdehyde + phosphate + NADP(+) = N-acetyl-L-glutamyl 5-phosphate + NADPH + H(+). The protein operates within amino-acid biosynthesis; L-arginine biosynthesis; N(2)-acetyl-L-ornithine from L-glutamate: step 3/4. Functionally, catalyzes the NADPH-dependent reduction of N-acetyl-5-glutamyl phosphate to yield N-acetyl-L-glutamate 5-semialdehyde. This chain is N-acetyl-gamma-glutamyl-phosphate reductase, found in Arthrobacter sp. (strain FB24).